The primary structure comprises 490 residues: Actin-related protein 6 (490 aa).

Belongs to the actin family. ARP6 subfamily.

Its subcellular location is the cytoplasm. It is found in the cytoskeleton. The polypeptide is Actin-related protein 6 (Dictyostelium discoideum (Social amoeba)).